The chain runs to 60 residues: Large ribosomal subunit protein eL37 (60 aa).

Zn(2+)-binding residues include Cys19, Cys22, Cys34, and Cys37. The C4-type zinc-finger motif lies at 19–37 (CRRCGSISYHARHKVCSAC).

Belongs to the eukaryotic ribosomal protein eL37 family. Requires Zn(2+) as cofactor.

Functionally, binds to the 23S rRNA. This is Large ribosomal subunit protein eL37 from Methanosphaerula palustris (strain ATCC BAA-1556 / DSM 19958 / E1-9c).